A 413-amino-acid polypeptide reads, in one-letter code: Gamma-glutamyl phosphate reductase (413 aa).

It belongs to the gamma-glutamyl phosphate reductase family.

Its subcellular location is the cytoplasm. The catalysed reaction is L-glutamate 5-semialdehyde + phosphate + NADP(+) = L-glutamyl 5-phosphate + NADPH + H(+). It functions in the pathway amino-acid biosynthesis; L-proline biosynthesis; L-glutamate 5-semialdehyde from L-glutamate: step 2/2. Catalyzes the NADPH-dependent reduction of L-glutamate 5-phosphate into L-glutamate 5-semialdehyde and phosphate. The product spontaneously undergoes cyclization to form 1-pyrroline-5-carboxylate. This Leuconostoc mesenteroides subsp. mesenteroides (strain ATCC 8293 / DSM 20343 / BCRC 11652 / CCM 1803 / JCM 6124 / NCDO 523 / NBRC 100496 / NCIMB 8023 / NCTC 12954 / NRRL B-1118 / 37Y) protein is Gamma-glutamyl phosphate reductase.